Here is a 135-residue protein sequence, read N- to C-terminus: Protein PsiE homolog (135 aa).

4 consecutive transmembrane segments (helical) span residues 14–34 (LQTILNIGLLALATILVIFLV), 54–74 (YQLIEGIVIYFLYFEFIALIV), 82–102 (HFPLRYFIYIGITAIIRLIIV), and 107–127 (PSDTLVYSAAILLLVVTLYLA).

Belongs to the PsiE family.

It is found in the cell inner membrane. The chain is Protein PsiE homolog from Pectobacterium atrosepticum (strain SCRI 1043 / ATCC BAA-672) (Erwinia carotovora subsp. atroseptica).